The chain runs to 210 residues: Probable transcriptional regulator ycf29 (210 aa).

The region spanning 3-119 is the Response regulatory domain; sequence NILILDTDIG…ELVVIIEGVL (117 aa). At D52 the chain carries 4-aspartylphosphate. The 66-residue stretch at 142-207 folds into the HTH luxR-type domain; that stretch reads SNNLKINFTP…ELVKYALENN (66 aa).

It localises to the plastid. Its subcellular location is the cyanelle. The protein is Probable transcriptional regulator ycf29 (ycf29) of Cyanophora paradoxa.